The following is a 318-amino-acid chain: NADH-ubiquinone oxidoreductase chain 1 (318 aa).

Transmembrane regions (helical) follow at residues 2–22 (FLMN…FLTL), 68–88 (ISLF…MWIP), 102–122 (ILFI…SGWA), 146–166 (LAII…SSLI), 171–191 (FTWL…STLA), 217–237 (AGPF…MNAL), 253–273 (EMFT…FLWI), and 294–314 (LPLT…MACI).

It belongs to the complex I subunit 1 family.

It is found in the mitochondrion inner membrane. The catalysed reaction is a ubiquinone + NADH + 5 H(+)(in) = a ubiquinol + NAD(+) + 4 H(+)(out). Functionally, core subunit of the mitochondrial membrane respiratory chain NADH dehydrogenase (Complex I) that is believed to belong to the minimal assembly required for catalysis. Complex I functions in the transfer of electrons from NADH to the respiratory chain. The immediate electron acceptor for the enzyme is believed to be ubiquinone. This chain is NADH-ubiquinone oxidoreductase chain 1 (MT-ND1), found in Tamias sibiricus (Siberian chipmunk).